Reading from the N-terminus, the 299-residue chain is uncharacterized protein (299 aa).

The chain crosses the membrane as a helical span at residues 4 to 20; sequence LFFIFVMLIVLLCGCTS.

Its subcellular location is the membrane. This is an uncharacterized protein from Methanocaldococcus jannaschii (strain ATCC 43067 / DSM 2661 / JAL-1 / JCM 10045 / NBRC 100440) (Methanococcus jannaschii).